We begin with the raw amino-acid sequence, 275 residues long: Tryptophan synthase alpha chain (275 aa).

Active-site proton acceptor residues include Glu-60 and Asp-71.

The protein belongs to the TrpA family. Tetramer of two alpha and two beta chains.

The catalysed reaction is (1S,2R)-1-C-(indol-3-yl)glycerol 3-phosphate + L-serine = D-glyceraldehyde 3-phosphate + L-tryptophan + H2O. It functions in the pathway amino-acid biosynthesis; L-tryptophan biosynthesis; L-tryptophan from chorismate: step 5/5. In terms of biological role, the alpha subunit is responsible for the aldol cleavage of indoleglycerol phosphate to indole and glyceraldehyde 3-phosphate. In Prochlorococcus marinus (strain MIT 9313), this protein is Tryptophan synthase alpha chain.